Here is a 255-residue protein sequence, read N- to C-terminus: 5'-nucleotidase SurE (255 aa).

A divalent metal cation contacts are provided by Asp-8, Asp-9, Ser-40, and Asn-93.

This sequence belongs to the SurE nucleotidase family. It depends on a divalent metal cation as a cofactor.

It is found in the cytoplasm. The enzyme catalyses a ribonucleoside 5'-phosphate + H2O = a ribonucleoside + phosphate. Functionally, nucleotidase that shows phosphatase activity on nucleoside 5'-monophosphates. The protein is 5'-nucleotidase SurE of Bradyrhizobium diazoefficiens (strain JCM 10833 / BCRC 13528 / IAM 13628 / NBRC 14792 / USDA 110).